Consider the following 326-residue polypeptide: MSFLSGFFGPICEIEVVLNDAETRKVSEIKTEEGKVEKHFLFYDGESVAGKVNIVFKQPGKRLEHHGIRIEFVGQIELFNDKSNTHEFVNLVKELALPGELTQSRNYDFEFMQVEKPYESYIGSNVRLRYFLKVTIVRRLTDLVKEYDLIVHQLATYPDVNNSIKMEVGIEDCLHIEFEYNKSKYHLKDVIVGKIYFLLVRIKIQHMELQLIKKEITGIGPSTTTETETVAKYEIMDGAPVKGESIPIRLFIAGYDPTPTMRDVNKKFSVRYFLNLVLVDEEDRRYFKQQEIVLWRKAPEKIKKRTNFHQRFEPQEPQASAEEPEI.

A disordered region spans residues 306–326 (TNFHQRFEPQEPQASAEEPEI). Low complexity predominate over residues 315–326 (QEPQASAEEPEI).

Belongs to the VPS26 family. As to quaternary structure, component of the heterotrimeric retromer cargo-selective complex (CSC) which is believed to associate with variable sorting nexins to form functionally distinct retromer complex variants.

The protein resides in the cytoplasm. It is found in the endosome membrane. It localises to the early endosome. Acts as a component of the retromer cargo-selective complex (CSC). The CSC is believed to be the core functional component of retromer or respective retromer complex variants acting to prevent missorting of selected transmembrane cargo proteins into the lysosomal degradation pathway. Retromer mediates retrograde transport of cargo proteins from endosomes to the trans-Golgi network (TGN). This Xenopus laevis (African clawed frog) protein is Vacuolar protein sorting-associated protein 26A-A (vps26a-a).